A 180-amino-acid polypeptide reads, in one-letter code: Large ribosomal subunit protein uL10 (180 aa).

The protein belongs to the universal ribosomal protein uL10 family. As to quaternary structure, part of the ribosomal stalk of the 50S ribosomal subunit. The N-terminus interacts with L11 and the large rRNA to form the base of the stalk. The C-terminus forms an elongated spine to which L12 dimers bind in a sequential fashion forming a multimeric L10(L12)X complex.

In terms of biological role, forms part of the ribosomal stalk, playing a central role in the interaction of the ribosome with GTP-bound translation factors. The chain is Large ribosomal subunit protein uL10 from Thermosipho melanesiensis (strain DSM 12029 / CIP 104789 / BI429).